The primary structure comprises 328 residues: MGGAARLSAPQALVLWAALGAAAHIGPAPDPEDWWSYKENLQGNFVPGPPFWGLVNAAWSLCAVGKRQSPVDVELKRVLYDPFLPPLRLSTGGEKLRGTLYNTGRHVSFLPASRPVVNVSGGPLLYSHRLSELRLLFGARDGAGSEHQINHEGFSAEVQLIHFNQELYGNLSAASRGPNGLAILSLFVNVAGSSNPFLSRLLNRDTITRISYKNDAYFLQDLSLELLFPESFGFITYQGSLSTPPCSETVTWILIDRALNITSLQMHSLRLLSQNPPSQIFQSLSGNGRPLQPLAHRALRGNRDPRHPERRCRGPNYRLHVDGGPHGR.

The N-terminal stretch at 1–23 (MGGAARLSAPQALVLWAALGAAA) is a signal peptide. In terms of domain architecture, Alpha-carbonic anhydrase spans 33–303 (DWWSYKENLQ…LAHRALRGNR (271 aa)). N118 carries an N-linked (GlcNAc...) asparagine glycan. The interval 300–328 (RGNRDPRHPERRCRGPNYRLHVDGGPHGR) is disordered. Over residues 319–328 (LHVDGGPHGR) the composition is skewed to basic and acidic residues.

Belongs to the alpha-carbonic anhydrase family.

It is found in the secreted. In terms of biological role, does not have a catalytic activity. The protein is Carbonic anhydrase-related protein 11 (Ca11) of Mus musculus (Mouse).